The primary structure comprises 64 residues: Large ribosomal subunit protein bL35 (64 aa).

Positions 1–26 (MPKMKTKSAAAKRFKTTKSGKIKRKQ) are enriched in basic residues. A disordered region spans residues 1–46 (MPKMKTKSAAAKRFKTTKSGKIKRKQAYTSHLAPNKTTKQKRHLRK).

This sequence belongs to the bacterial ribosomal protein bL35 family.

The chain is Large ribosomal subunit protein bL35 from Mycoplasmoides gallisepticum (strain R(low / passage 15 / clone 2)) (Mycoplasma gallisepticum).